Reading from the N-terminus, the 172-residue chain is 3-hydroxydecanoyl-[acyl-carrier-protein] dehydratase (172 aa).

Histidine 71 is an active-site residue.

It belongs to the thioester dehydratase family. FabA subfamily. In terms of assembly, homodimer.

It is found in the cytoplasm. The catalysed reaction is a (3R)-hydroxyacyl-[ACP] = a (2E)-enoyl-[ACP] + H2O. It carries out the reaction (3R)-hydroxydecanoyl-[ACP] = (2E)-decenoyl-[ACP] + H2O. The enzyme catalyses (2E)-decenoyl-[ACP] = (3Z)-decenoyl-[ACP]. The protein operates within lipid metabolism; fatty acid biosynthesis. Its function is as follows. Necessary for the introduction of cis unsaturation into fatty acids. Catalyzes the dehydration of (3R)-3-hydroxydecanoyl-ACP to E-(2)-decenoyl-ACP and then its isomerization to Z-(3)-decenoyl-ACP. Can catalyze the dehydratase reaction for beta-hydroxyacyl-ACPs with saturated chain lengths up to 16:0, being most active on intermediate chain length. This is 3-hydroxydecanoyl-[acyl-carrier-protein] dehydratase from Escherichia coli (strain 55989 / EAEC).